Here is a 197-residue protein sequence, read N- to C-terminus: Ribonuclease HII (197 aa).

The region spanning 14–197 (GIIAGVDEVG…RKNFAPIRIL (184 aa)) is the RNase H type-2 domain. Positions 20, 21, and 112 each coordinate a divalent metal cation.

The protein belongs to the RNase HII family. It depends on Mn(2+) as a cofactor. The cofactor is Mg(2+).

The protein localises to the cytoplasm. The enzyme catalyses Endonucleolytic cleavage to 5'-phosphomonoester.. Endonuclease that specifically degrades the RNA of RNA-DNA hybrids. This is Ribonuclease HII from Wolbachia pipientis subsp. Culex pipiens (strain wPip).